A 513-amino-acid chain; its full sequence is Maturase K (513 aa).

Belongs to the intron maturase 2 family. MatK subfamily.

Its subcellular location is the plastid. The protein localises to the chloroplast. Functionally, usually encoded in the trnK tRNA gene intron. Probably assists in splicing its own and other chloroplast group II introns. The protein is Maturase K of Typha angustifolia (Narrow leaf cattail).